Here is a 131-residue protein sequence, read N- to C-terminus: Large ribosomal subunit protein bL17 (131 aa).

This sequence belongs to the bacterial ribosomal protein bL17 family. In terms of assembly, part of the 50S ribosomal subunit. Contacts protein L32.

This Thermotoga sp. (strain RQ2) protein is Large ribosomal subunit protein bL17.